The sequence spans 299 residues: Bifunctional protein FolD 1 (299 aa).

Residues 168 to 170 (GRS), S193, and I234 contribute to the NADP(+) site.

It belongs to the tetrahydrofolate dehydrogenase/cyclohydrolase family. Homodimer.

The catalysed reaction is (6R)-5,10-methylene-5,6,7,8-tetrahydrofolate + NADP(+) = (6R)-5,10-methenyltetrahydrofolate + NADPH. It catalyses the reaction (6R)-5,10-methenyltetrahydrofolate + H2O = (6R)-10-formyltetrahydrofolate + H(+). Its pathway is one-carbon metabolism; tetrahydrofolate interconversion. In terms of biological role, catalyzes the oxidation of 5,10-methylenetetrahydrofolate to 5,10-methenyltetrahydrofolate and then the hydrolysis of 5,10-methenyltetrahydrofolate to 10-formyltetrahydrofolate. The polypeptide is Bifunctional protein FolD 1 (Mesorhizobium japonicum (strain LMG 29417 / CECT 9101 / MAFF 303099) (Mesorhizobium loti (strain MAFF 303099))).